A 197-amino-acid polypeptide reads, in one-letter code: dTTP/UTP pyrophosphatase (197 aa).

Aspartate 70 serves as the catalytic Proton acceptor.

This sequence belongs to the Maf family. YhdE subfamily. The cofactor is a divalent metal cation.

The protein localises to the cytoplasm. The catalysed reaction is dTTP + H2O = dTMP + diphosphate + H(+). It carries out the reaction UTP + H2O = UMP + diphosphate + H(+). Functionally, nucleoside triphosphate pyrophosphatase that hydrolyzes dTTP and UTP. May have a dual role in cell division arrest and in preventing the incorporation of modified nucleotides into cellular nucleic acids. The sequence is that of dTTP/UTP pyrophosphatase from Methanosarcina barkeri (strain Fusaro / DSM 804).